A 635-amino-acid polypeptide reads, in one-letter code: DNA topoisomerase 4 subunit B (635 aa).

ATP-binding positions include Tyr-5, Asn-45, Asp-72, Gly-113–Ala-119, and Lys-340. In terms of domain architecture, Toprim spans Arg-422 to Pro-537. 3 residues coordinate Mg(2+): Glu-428, Asp-502, and Asp-504.

Belongs to the type II topoisomerase family. ParE type 2 subfamily. As to quaternary structure, heterotetramer composed of ParC and ParE. Mg(2+) serves as cofactor. Requires Mn(2+) as cofactor. Ca(2+) is required as a cofactor.

It catalyses the reaction ATP-dependent breakage, passage and rejoining of double-stranded DNA.. Its function is as follows. Topoisomerase IV is essential for chromosome segregation. It relaxes supercoiled DNA. Performs the decatenation events required during the replication of a circular DNA molecule. The protein is DNA topoisomerase 4 subunit B of Mycoplasma pneumoniae (strain ATCC 29342 / M129 / Subtype 1) (Mycoplasmoides pneumoniae).